A 633-amino-acid polypeptide reads, in one-letter code: Acetylcholinesterase (633 aa).

The N-terminal stretch at 1–23 (MKILDALLFPVIFIMFFIHLSIA) is a signal peptide. Cysteine 91 and cysteine 118 are oxidised to a cystine. Residues asparagine 133 and asparagine 184 are each glycosylated (N-linked (GlcNAc...) asparagine). The active-site Acyl-ester intermediate is serine 225. Cysteine 279 and cysteine 290 are oxidised to a cystine. N-linked (GlcNAc...) asparagine glycosylation is present at asparagine 283. The active-site Charge relay system is glutamate 352. A glycan (N-linked (GlcNAc...) asparagine) is linked at asparagine 368. Cysteine 427 and cysteine 579 are joined by a disulfide. Histidine 494 acts as the Charge relay system in catalysis. N-linked (GlcNAc...) asparagine glycosylation is found at asparagine 511 and asparagine 591.

Belongs to the type-B carboxylesterase/lipase family.

It is found in the synapse. It localises to the secreted. The protein resides in the cell membrane. The enzyme catalyses acetylcholine + H2O = choline + acetate + H(+). Terminates signal transduction at the neuromuscular junction by rapid hydrolysis of the acetylcholine released into the synaptic cleft. The protein is Acetylcholinesterase (ache) of Electrophorus electricus (Electric eel).